The following is a 127-amino-acid chain: Aspartate 1-decarboxylase (127 aa).

Residue Ser25 is the Schiff-base intermediate with substrate; via pyruvic acid of the active site. Ser25 is subject to Pyruvic acid (Ser). A substrate-binding site is contributed by Thr57. The Proton donor role is filled by Tyr58. Substrate is bound at residue 73–75; that stretch reads GSA.

It belongs to the PanD family. Heterooctamer of four alpha and four beta subunits. Pyruvate is required as a cofactor. Is synthesized initially as an inactive proenzyme, which is activated by self-cleavage at a specific serine bond to produce a beta-subunit with a hydroxyl group at its C-terminus and an alpha-subunit with a pyruvoyl group at its N-terminus.

It localises to the cytoplasm. It carries out the reaction L-aspartate + H(+) = beta-alanine + CO2. The protein operates within cofactor biosynthesis; (R)-pantothenate biosynthesis; beta-alanine from L-aspartate: step 1/1. Functionally, catalyzes the pyruvoyl-dependent decarboxylation of aspartate to produce beta-alanine. The polypeptide is Aspartate 1-decarboxylase (Polaromonas naphthalenivorans (strain CJ2)).